A 244-amino-acid polypeptide reads, in one-letter code: Biosynthetic peptidoglycan transglycosylase (244 aa).

Residues 25-45 form a helical membrane-spanning segment; it reads LLLLLAIALLYQSWFLLHIIY.

This sequence belongs to the glycosyltransferase 51 family.

The protein resides in the cell inner membrane. It carries out the reaction [GlcNAc-(1-&gt;4)-Mur2Ac(oyl-L-Ala-gamma-D-Glu-L-Lys-D-Ala-D-Ala)](n)-di-trans,octa-cis-undecaprenyl diphosphate + beta-D-GlcNAc-(1-&gt;4)-Mur2Ac(oyl-L-Ala-gamma-D-Glu-L-Lys-D-Ala-D-Ala)-di-trans,octa-cis-undecaprenyl diphosphate = [GlcNAc-(1-&gt;4)-Mur2Ac(oyl-L-Ala-gamma-D-Glu-L-Lys-D-Ala-D-Ala)](n+1)-di-trans,octa-cis-undecaprenyl diphosphate + di-trans,octa-cis-undecaprenyl diphosphate + H(+). The protein operates within cell wall biogenesis; peptidoglycan biosynthesis. Peptidoglycan polymerase that catalyzes glycan chain elongation from lipid-linked precursors. This chain is Biosynthetic peptidoglycan transglycosylase, found in Nitrosomonas eutropha (strain DSM 101675 / C91 / Nm57).